A 430-amino-acid polypeptide reads, in one-letter code: Glutamate-1-semialdehyde 2,1-aminomutase (430 aa).

Lysine 269 carries the post-translational modification N6-(pyridoxal phosphate)lysine.

It belongs to the class-III pyridoxal-phosphate-dependent aminotransferase family. HemL subfamily. In terms of assembly, homodimer. Requires pyridoxal 5'-phosphate as cofactor.

The protein resides in the cytoplasm. It catalyses the reaction (S)-4-amino-5-oxopentanoate = 5-aminolevulinate. It functions in the pathway porphyrin-containing compound metabolism; protoporphyrin-IX biosynthesis; 5-aminolevulinate from L-glutamyl-tRNA(Glu): step 2/2. This Desulfitobacterium hafniense (strain DSM 10664 / DCB-2) protein is Glutamate-1-semialdehyde 2,1-aminomutase.